The primary structure comprises 798 residues: Peregrinol diphosphate synthase TPS1, chloroplastic (798 aa).

Residues 1–25 constitute a chloroplast transit peptide; it reads MASLSTPNINNTTFVNSKTQLPAVK. K243 contacts substrate. Positions 377 and 379 each coordinate Mg(2+). Residues 377 to 380 carry the DXDD motif motif; the sequence is DLDD. Residue K463 coordinates substrate.

The protein belongs to the terpene synthase family. The cofactor is Mg(2+). In terms of tissue distribution, mostly expressed in trichomes of leaves and fruits.

It localises to the plastid. The protein resides in the chloroplast. The enzyme catalyses peregrinol diphosphate = (2E,6E,10E)-geranylgeranyl diphosphate + H2O. It participates in secondary metabolite biosynthesis; terpenoid biosynthesis. Functionally, involved in the biosynthesis of labdane-type diterpenoid including cleroda-dienols, and peregrinol lactones and furan derivatives, dopaminergic diterpenoids that can bind to dopamine receptors in the human pituitary gland, have probably ability to lower prolactin levels, and are used to treat menstrual cycle disorders (e.g. premenstrual syndrome and mastodynia). Terpene synthase that produces peregrinol diphosphate from geranylgeranyl diphosphate (GGPP). The sequence is that of Peregrinol diphosphate synthase TPS1, chloroplastic from Vitex agnus-castus (Chaste tree).